Consider the following 567-residue polypeptide: Proline--tRNA ligase (567 aa).

The protein belongs to the class-II aminoacyl-tRNA synthetase family. ProS type 1 subfamily. In terms of assembly, homodimer.

The protein resides in the cytoplasm. The catalysed reaction is tRNA(Pro) + L-proline + ATP = L-prolyl-tRNA(Pro) + AMP + diphosphate. Its function is as follows. Catalyzes the attachment of proline to tRNA(Pro) in a two-step reaction: proline is first activated by ATP to form Pro-AMP and then transferred to the acceptor end of tRNA(Pro). As ProRS can inadvertently accommodate and process non-cognate amino acids such as alanine and cysteine, to avoid such errors it has two additional distinct editing activities against alanine. One activity is designated as 'pretransfer' editing and involves the tRNA(Pro)-independent hydrolysis of activated Ala-AMP. The other activity is designated 'posttransfer' editing and involves deacylation of mischarged Ala-tRNA(Pro). The misacylated Cys-tRNA(Pro) is not edited by ProRS. This Idiomarina loihiensis (strain ATCC BAA-735 / DSM 15497 / L2-TR) protein is Proline--tRNA ligase.